The primary structure comprises 425 residues: Homogentisate 1,2-dioxygenase (425 aa).

His283 (proton acceptor) is an active-site residue. Residues His326 and Glu332 each coordinate Fe cation. Tyr341 and His362 together coordinate homogentisate. His362 serves as a coordination point for Fe cation.

The protein belongs to the homogentisate dioxygenase family. Hexamer; dimer of trimers. Fe cation serves as cofactor.

It catalyses the reaction homogentisate + O2 = 4-maleylacetoacetate + H(+). Its pathway is amino-acid degradation; L-phenylalanine degradation; acetoacetate and fumarate from L-phenylalanine: step 4/6. Involved in the catabolism of homogentisate (2,5-dihydroxyphenylacetate or 2,5-OH-PhAc), a central intermediate in the degradation of phenylalanine and tyrosine. Catalyzes the oxidative ring cleavage of the aromatic ring of homogentisate to yield maleylacetoacetate. The chain is Homogentisate 1,2-dioxygenase from Caulobacter vibrioides (strain ATCC 19089 / CIP 103742 / CB 15) (Caulobacter crescentus).